Here is a 494-residue protein sequence, read N- to C-terminus: MKARVRFAPSPTGPLHIGSIRTALYNYLFAKKYHGDFILRIEDTDSTRFIPGAEEYIIETFKWLGITFDEGPYRQSERKAIYKEYVDELLNKNLAYIAFDTPEELEAKRRNIPNFQYDAITRMTMNNSLTLSKEETKKRIANSNQYVVRIKIDPNQTIIVNDLIRGEMSISSSTLDDKVLYKSSDNLPTYHLANIVDDHLMKITHVIRGEEWLSSTPLHIILYQYFGWGEKMPVFAHLPLLLKPDGKGKLSKRDGERFGFPIFPLQWTDSKTGKSISGYREDGYLPEALINFLALLGWNPGSEQEFFSIDELSVLFSLKKCSKNGAKFDYKKVEWFNHQYIQKKSDKEIAELFFHFYSKKLEKQDFKKITEVIGMVKGRISSIRDLWYETAFFFVAPNTYDEKIVQKRWRAESPIQLTELSELLATITNFSLQIVEKTIRGWINNKGYHPSNIMNACRLALVGTAKGPGIFHIIEILGKEEVIIRIKKAIQVLR.

Positions 9–19 (PSPTGPLHIGS) match the 'HIGH' region motif. The 'KMSKS' region motif lies at 249 to 253 (KLSKR). K252 provides a ligand contact to ATP.

Belongs to the class-I aminoacyl-tRNA synthetase family. Glutamate--tRNA ligase type 1 subfamily. Monomer.

It is found in the cytoplasm. It catalyses the reaction tRNA(Glu) + L-glutamate + ATP = L-glutamyl-tRNA(Glu) + AMP + diphosphate. Functionally, catalyzes the attachment of glutamate to tRNA(Glu) in a two-step reaction: glutamate is first activated by ATP to form Glu-AMP and then transferred to the acceptor end of tRNA(Glu). This is Glutamate--tRNA ligase from Azobacteroides pseudotrichonymphae genomovar. CFP2.